The primary structure comprises 29 residues: Conotoxin pr6a (29 aa).

3 cysteine pairs are disulfide-bonded: Cys-2–Cys-20, Cys-9–Cys-24, and Cys-19–Cys-28.

As to expression, expressed by the venom duct.

The protein localises to the secreted. Its function is as follows. Intraperitoneal injection into fish (1 nmol) provokes hyperactivity and erratic swimming in various directions after 14 minutes. This Conus parius (Cone snail) protein is Conotoxin pr6a.